The sequence spans 71 residues: Small ribosomal subunit protein bS21 (71 aa).

Positions 47 to 71 (RENATRAKRHAKRVARENARNTRLY) are disordered. A compositionally biased stretch (basic and acidic residues) spans 60–71 (VARENARNTRLY).

This sequence belongs to the bacterial ribosomal protein bS21 family.

In Actinobacillus succinogenes (strain ATCC 55618 / DSM 22257 / CCUG 43843 / 130Z), this protein is Small ribosomal subunit protein bS21.